Consider the following 371-residue polypeptide: MDVSMDQDTRIDLKNFTLEELTEFLAGMGKERFRAGQVMRWMYHRLVDDFDAMSDLSKVLRAELHQRARISRLTPEATEDSRDGTRKYLFRLEDGETIESVRIPMDDNRATLCISTQVGCAMGCVFCHTGSFGLVRNLTPGEIVNQVCAALADGPVNNIVLMGMGEPLHNLDNVVKALQILYMPQGLDYSPRKVTLSTAGLVPQMQELGKRVRVNLAVSLNATTDEVRNRLMPVNQRYPLQQLMAACRQYPLHAKKRITFEYILIRDVNDSDQDARRLVKLLHGIKAKVNIIPFNEHSASEFRAPTEERISRFQGYLLDHGMVAIRRASKGQDISAACGQLKGKLTVSPPAQESERNSARPDRSQGKGKHL.

Glutamate 99 acts as the Proton acceptor in catalysis. A Radical SAM core domain is found at 106–333 (DDNRATLCIS…AIRRASKGQD (228 aa)). Cysteine 113 and cysteine 338 are disulfide-bonded. Cysteine 120, cysteine 124, and cysteine 127 together coordinate [4Fe-4S] cluster. Residues 165–166 (GE), serine 197, 219–221 (SLN), and asparagine 295 contribute to the S-adenosyl-L-methionine site. Residue cysteine 338 is the S-methylcysteine intermediate of the active site. Positions 345 to 371 (LTVSPPAQESERNSARPDRSQGKGKHL) are disordered. A compositionally biased stretch (basic and acidic residues) spans 353–365 (ESERNSARPDRSQ).

It belongs to the radical SAM superfamily. RlmN family. It depends on [4Fe-4S] cluster as a cofactor.

It is found in the cytoplasm. It carries out the reaction adenosine(2503) in 23S rRNA + 2 reduced [2Fe-2S]-[ferredoxin] + 2 S-adenosyl-L-methionine = 2-methyladenosine(2503) in 23S rRNA + 5'-deoxyadenosine + L-methionine + 2 oxidized [2Fe-2S]-[ferredoxin] + S-adenosyl-L-homocysteine. It catalyses the reaction adenosine(37) in tRNA + 2 reduced [2Fe-2S]-[ferredoxin] + 2 S-adenosyl-L-methionine = 2-methyladenosine(37) in tRNA + 5'-deoxyadenosine + L-methionine + 2 oxidized [2Fe-2S]-[ferredoxin] + S-adenosyl-L-homocysteine. Specifically methylates position 2 of adenine 2503 in 23S rRNA and position 2 of adenine 37 in tRNAs. m2A2503 modification seems to play a crucial role in the proofreading step occurring at the peptidyl transferase center and thus would serve to optimize ribosomal fidelity. This Syntrophotalea carbinolica (strain DSM 2380 / NBRC 103641 / GraBd1) (Pelobacter carbinolicus) protein is Dual-specificity RNA methyltransferase RlmN.